Here is an 841-residue protein sequence, read N- to C-terminus: Toll-like receptor 4 (841 aa).

The signal sequence occupies residues 1–23; it reads MMARARLAAALIPATAILSCLRT. Topologically, residues 24 to 632 are extracellular; sequence ESWDPCVQVV…FRNATCQLSK (609 aa). A disulfide bond links Cys29 and Cys40. Residues Asn35 and Asn73 are each glycosylated (N-linked (GlcNAc...) asparagine). LRR repeat units lie at residues 55–76, 79–100, 103–124, 127–148, 151–172, 176–197, and 205–225; these read STKMLDLSFNYLRHLGSHNFSS, ELQVLDLSRCEIKIIEDDTFQG, HLSTLILTGNPIQSLAWGAFSG, SLQKLVAVETNLVSLNDFPIGH, NLKELNVAHNFIHSFKLPEYFS, NLEHLDLSNNKIQNIYYEDVKV, and NLSLDLSLNPLDFIEPGTFKE. Asn205, Asn238, Asn282, and Asn309 each carry an N-linked (GlcNAc...) asparagine glycan. Cys281 and Cys306 form a disulfide bridge. 9 LRR repeats span residues 352 to 373, 374 to 394, 400 to 422, 423 to 444, 448 to 469, 472 to 495, 497 to 518, 521 to 542, and 545 to 568; these read SLKKFVFTDNKDISTFTEFQLP, SLQYLDLKRNHLSFKGCCSHT, NLKHLDLSFNDVITLGSNFMGLE, QLEHLDFQHSTLKQINAFSAFL, NLRYLDISYTNIRIVFHGIFTG, SLQTLKMAGNSFQNNLLPDIFTEL, NLTVLDLSKCQLEQVAQTAFHS, SLQVLNMSHNKLLSLDTFLYEP, and SLRILDCSFNRIMASKEQELQNLP. Cys390 and Cys391 are joined by a disulfide. Asn497 and Asn526 each carry an N-linked (GlcNAc...) asparagine glycan. An N-linked (GlcNAc...) asparagine glycan is attached at Asn575. In terms of domain architecture, LRRCT spans 579–630; it reads NAFACVCEHQSFLQWVKDQRQLLVGAEQMMCAEPLDMEDMPVLSFRNATCQL. Cystine bridges form between Cys583–Cys609 and Cys585–Cys628. Asn625 carries N-linked (GlcNAc...) asparagine glycosylation. Residues 633–653 traverse the membrane as a helical segment; the sequence is TIISVSVVTVLLVSVVGVLVY. The Cytoplasmic segment spans residues 654–841; sequence KFYFHLMLLA…TNPQEATTST (188 aa). In terms of domain architecture, TIR spans 673–816; sequence SIYDAFVIYS…VFWRRLRKAL (144 aa). The tract at residues 820-841 is disordered; the sequence is KPQSPEGTADAETNPQEATTST. Positions 830–841 are enriched in polar residues; sequence AETNPQEATTST.

This sequence belongs to the Toll-like receptor family. As to quaternary structure, belongs to the lipopolysaccharide (LPS) receptor, a multi-protein complex containing at least CD14, LY96 and TLR4. Binding to bacterial LPS leads to homodimerization. Interacts with LY96 via the extracellular domain. Interacts with MYD88 and TIRAP via their respective TIR domains. Interacts with TICAM2. Interacts with NOX4. Interacts with CNPY3 and HSP90B1; this interaction is required for proper folding in the endoplasmic reticulum. Interacts with MAP3K21; this interaction leads to negative regulation of TLR4 signaling. Interacts with CD36, following CD36 stimulation by oxLDL or amyloid-beta 42, and forms a heterodimer with TLR6. The trimeric complex is internalized and triggers inflammatory response. LYN kinase activity facilitates TLR4-TLR6 heterodimerization and signal initiation. Interacts with TICAM1 in response to LPS in a WDFY1-dependent manner. Interacts with WDFY1 in response to LPS. Interacts with SMPDL3B. Interacts with CEACAM1; upon lipopolysaccharide stimulation, forms a complex including TLR4 and the phosphorylated form of SYK and CEACAM1, which in turn, recruits PTPN6 that dephosphorylates SYK, reducing the production of reactive oxygen species (ROS) and lysosome disruption, which in turn, reduces the activity of the inflammasome. Interacts with RFTN1; the interaction occurs in response to lipopolysaccharide stimulation. Interacts with SCIMP; the interaction occurs in response to lipopolysaccharide stimulation and is enhanced by phosphorylation of SCIMP by LYN. This interaction facilitates the phosphorylation of TLR4 by LYN which elicits a selective cytokine response in macrophages. Interacts with TRAF3IP3. Interacts with TREM1; this interaction enhances TLR4-mediated inflammatory response. Interacts with ZG16B/PAUF. Interacts with CD82; this interaction inhibits TLR4-mediated signaling pathway. In terms of processing, phosphorylated on tyrosine residues by LYN after binding lipopolysaccharide. Ubiquitinated by RNF128 via 'Lys-28'-linked polyubiquitin chains, leading to proteasomal degradation.

The protein resides in the cell membrane. Its subcellular location is the early endosome. The protein localises to the cell projection. It localises to the ruffle. In terms of biological role, transmembrane receptor that functions as a pattern recognition receptor recognizing pathogen- and damage-associated molecular patterns (PAMPs and DAMPs) to induce innate immune responses via downstream signaling pathways. At the plasma membrane, cooperates with LY96 to mediate the innate immune response to bacterial lipopolysaccharide (LPS). Also involved in LPS-independent inflammatory responses triggered by free fatty acids, such as palmitate, and Ni(2+). Mechanistically, acts via MYD88, TIRAP and TRAF6, leading to NF-kappa-B activation, cytokine secretion and the inflammatory response. Alternatively, CD14-mediated TLR4 internalization via endocytosis is associated with the initiation of a MYD88-independent signaling via the TICAM1-TBK1-IRF3 axis leading to type I interferon production. In addition to the secretion of proinflammatory cytokines, initiates the activation of NLRP3 inflammasome and formation of a positive feedback loop between autophagy and NF-kappa-B signaling cascade. In complex with TLR6, promotes inflammation in monocytes/macrophages by associating with TLR6 and the receptor CD86. Upon ligand binding, such as oxLDL or amyloid-beta 42, the TLR4:TLR6 complex is internalized and triggers inflammatory response, leading to NF-kappa-B-dependent production of CXCL1, CXCL2 and CCL9 cytokines, via MYD88 signaling pathway, and CCL5 cytokine, via TICAM1 signaling pathway. In myeloid dendritic cells, vesicular stomatitis virus glycoprotein G but not LPS promotes the activation of IRF7, leading to type I IFN production in a CD14-dependent manner. The polypeptide is Toll-like receptor 4 (TLR4) (Bos taurus (Bovine)).